The chain runs to 670 residues: UvrABC system protein B (670 aa).

The Helicase ATP-binding domain maps to 26-183 (EGLENGLAHQ…RRLSELQYSR (158 aa)). 39–46 (GVTGSGKT) contributes to the ATP binding site. Positions 92–115 (YYDYYQPEAYVPSSDTFIEKDASV) match the Beta-hairpin motif. Positions 431–597 (QVDDLLSEIR…GLNKKIGDIL (167 aa)) constitute a Helicase C-terminal domain. A disordered region spans residues 600–620 (GQPSTRGKGKGRGGKVADTNN). The region spanning 630 to 665 (DQKIRELEAKMYTHAQNLEFEQAAELRDQVHQLRQQ) is the UVR domain.

Belongs to the UvrB family. As to quaternary structure, forms a heterotetramer with UvrA during the search for lesions. Interacts with UvrC in an incision complex.

Its subcellular location is the cytoplasm. The UvrABC repair system catalyzes the recognition and processing of DNA lesions. A damage recognition complex composed of 2 UvrA and 2 UvrB subunits scans DNA for abnormalities. Upon binding of the UvrA(2)B(2) complex to a putative damaged site, the DNA wraps around one UvrB monomer. DNA wrap is dependent on ATP binding by UvrB and probably causes local melting of the DNA helix, facilitating insertion of UvrB beta-hairpin between the DNA strands. Then UvrB probes one DNA strand for the presence of a lesion. If a lesion is found the UvrA subunits dissociate and the UvrB-DNA preincision complex is formed. This complex is subsequently bound by UvrC and the second UvrB is released. If no lesion is found, the DNA wraps around the other UvrB subunit that will check the other stand for damage. The sequence is that of UvrABC system protein B from Yersinia enterocolitica serotype O:8 / biotype 1B (strain NCTC 13174 / 8081).